Reading from the N-terminus, the 795-residue chain is Phenylalanine--tRNA ligase beta subunit (795 aa).

A tRNA-binding domain is found at 39-148 (AGTFNGVKVG…IDAPIGMDFR (110 aa)). Residues 401-476 (PKPNKVALRR…RIYGYDNIPN (76 aa)) form the B5 domain. Mg(2+) is bound by residues aspartate 454, aspartate 460, glutamate 463, and glutamate 464. Residues 701–794 (SKFPANRRDI…VSEKFGASLR (94 aa)) form the FDX-ACB domain.

This sequence belongs to the phenylalanyl-tRNA synthetase beta subunit family. Type 1 subfamily. As to quaternary structure, tetramer of two alpha and two beta subunits. It depends on Mg(2+) as a cofactor.

The protein localises to the cytoplasm. It carries out the reaction tRNA(Phe) + L-phenylalanine + ATP = L-phenylalanyl-tRNA(Phe) + AMP + diphosphate + H(+). The sequence is that of Phenylalanine--tRNA ligase beta subunit from Vibrio vulnificus (strain CMCP6).